The following is a 273-amino-acid chain: (5R)-carbapenem-3-carboxylate synthase (273 aa).

2 residues coordinate Fe cation: histidine 101 and aspartate 103. Glycine 104 contributes to the substrate binding site. Threonine 130 provides a ligand contact to 2-oxoglutarate. Position 251 (histidine 251) interacts with Fe cation. 2-oxoglutarate is bound by residues arginine 253, arginine 263, and arginine 267.

It belongs to the TfdA dioxygenase family. As to quaternary structure, homohexamer. Dimer of trimers. Requires Fe(2+) as cofactor.

It is found in the cytoplasm. It catalyses the reaction (3S,5S)-carbapenam-3-caboxylate + 2-oxoglutarate + O2 = (5R)-carbapenem-3-carboxylate + succinate + CO2 + H2O. Inhibited by L-N-acetylproline and by D-N-acetylproline. In terms of biological role, catalyzes the Fe(2+) and alpha-ketoglutarate-dependent conversion of (3S,5S)-carbapenam to (5R)-carbapenem, an essential step in carbapenem antibiotic biosynthesis. This is (5R)-carbapenem-3-carboxylate synthase (carC) from Pectobacterium carotovorum subsp. carotovorum (Erwinia carotovora subsp. carotovora).